A 336-amino-acid polypeptide reads, in one-letter code: Glyceraldehyde-3-phosphate dehydrogenase (336 aa).

NAD(+)-binding positions include Arg-12–Ile-13, Asp-35, Arg-79, and Ser-121. Residues Ser-152–Thr-154 and Thr-183 contribute to the D-glyceraldehyde 3-phosphate site. The active-site Nucleophile is Cys-153. Asn-184 contacts NAD(+). Residues Arg-198, Thr-211–Gly-212, and Arg-234 contribute to the D-glyceraldehyde 3-phosphate site. Asn-317 is a binding site for NAD(+).

Belongs to the glyceraldehyde-3-phosphate dehydrogenase family. Homotetramer.

It is found in the cytoplasm. The catalysed reaction is D-glyceraldehyde 3-phosphate + phosphate + NAD(+) = (2R)-3-phospho-glyceroyl phosphate + NADH + H(+). Its pathway is carbohydrate degradation; glycolysis; pyruvate from D-glyceraldehyde 3-phosphate: step 1/5. Resistant to pentalenolactone. Functionally, catalyzes the oxidative phosphorylation of glyceraldehyde 3-phosphate (G3P) to 1,3-bisphosphoglycerate (BPG) using the cofactor NAD. The first reaction step involves the formation of a hemiacetal intermediate between G3P and a cysteine residue, and this hemiacetal intermediate is then oxidized to a thioester, with concomitant reduction of NAD to NADH. The reduced NADH is then exchanged with the second NAD, and the thioester is attacked by a nucleophilic inorganic phosphate to produce BPG. This Streptomyces coelicolor (strain ATCC BAA-471 / A3(2) / M145) protein is Glyceraldehyde-3-phosphate dehydrogenase (gap).